A 275-amino-acid polypeptide reads, in one-letter code: Homeobox protein Hox-C12a (275 aa).

Disordered regions lie at residues 101 to 129 and 148 to 213; these read SREN…DHGM and QLTQ…KRKP. Residues 155 to 177 are compositionally biased toward low complexity; that stretch reads SCQSMESDSSSSLLNEASKPSSS. A compositionally biased stretch (polar residues) spans 178-194; sequence DTQTLVSPGSHTGTITA. The segment at residues 207–266 is a DNA-binding region (homeobox); that stretch reads TRKKRKPYSKLQLAELEGEFMMNEFITRQRRRELSDRLNLSDQQVKIWFQNRRMKKKRLM.

The protein belongs to the Abd-B homeobox family.

The protein resides in the nucleus. In terms of biological role, sequence-specific transcription factor which is part of a developmental regulatory system that provides cells with specific positional identities on the anterior-posterior axis. This Takifugu rubripes (Japanese pufferfish) protein is Homeobox protein Hox-C12a (hoxc12a).